Reading from the N-terminus, the 170-residue chain is Ubiquitin-conjugating enzyme E2 G1 (170 aa).

Met-1 carries the N-acetylmethionine modification. At Thr-2 the chain carries N-acetylthreonine; in Ubiquitin-conjugating enzyme E2 G1, N-terminally processed. Positions 5 to 166 constitute a UBC core domain; the sequence is QSALLLRRQL…VARCVRKSQE (162 aa). Cys-90 (glycyl thioester intermediate) is an active-site residue.

Belongs to the ubiquitin-conjugating enzyme family. Post-translationally, autoubiquitinated.

The catalysed reaction is S-ubiquitinyl-[E1 ubiquitin-activating enzyme]-L-cysteine + [E2 ubiquitin-conjugating enzyme]-L-cysteine = [E1 ubiquitin-activating enzyme]-L-cysteine + S-ubiquitinyl-[E2 ubiquitin-conjugating enzyme]-L-cysteine.. The protein operates within protein modification; protein ubiquitination. Accepts ubiquitin from the E1 complex and catalyzes its covalent attachment to other proteins. In vitro catalyzes 'Lys-48'-, as well as 'Lys-63'-linked polyubiquitination. May be involved in degradation of muscle-specific proteins. Mediates polyubiquitination of CYP3A4. The chain is Ubiquitin-conjugating enzyme E2 G1 (UBE2G1) from Macaca fascicularis (Crab-eating macaque).